We begin with the raw amino-acid sequence, 448 residues long: Putative diacyglycerol O-acyltransferase MT3848 (448 aa).

His136 acts as the Proton acceptor in catalysis.

The protein belongs to the long-chain O-acyltransferase family.

It catalyses the reaction an acyl-CoA + a 1,2-diacyl-sn-glycerol = a triacyl-sn-glycerol + CoA. It participates in glycerolipid metabolism; triacylglycerol biosynthesis. The chain is Putative diacyglycerol O-acyltransferase MT3848 from Mycobacterium tuberculosis (strain CDC 1551 / Oshkosh).